Consider the following 332-residue polypeptide: uncharacterized protein (332 aa).

The chain crosses the membrane as a helical span at residues Cys-27–Leu-47.

The protein localises to the membrane. This is an uncharacterized protein from Treponema pallidum (strain Nichols).